A 414-amino-acid polypeptide reads, in one-letter code: Serine hydroxymethyltransferase (414 aa).

(6S)-5,6,7,8-tetrahydrofolate contacts are provided by residues leucine 118 and 122–124; that span reads GHL. An N6-(pyridoxal phosphate)lysine modification is found at lysine 227. (6S)-5,6,7,8-tetrahydrofolate-binding positions include glutamate 240 and 350–352; that span reads SPF.

It belongs to the SHMT family. Homodimer. The cofactor is pyridoxal 5'-phosphate.

It is found in the cytoplasm. The catalysed reaction is (6R)-5,10-methylene-5,6,7,8-tetrahydrofolate + glycine + H2O = (6S)-5,6,7,8-tetrahydrofolate + L-serine. Its pathway is one-carbon metabolism; tetrahydrofolate interconversion. It participates in amino-acid biosynthesis; glycine biosynthesis; glycine from L-serine: step 1/1. Catalyzes the reversible interconversion of serine and glycine with tetrahydrofolate (THF) serving as the one-carbon carrier. This reaction serves as the major source of one-carbon groups required for the biosynthesis of purines, thymidylate, methionine, and other important biomolecules. Also exhibits THF-independent aldolase activity toward beta-hydroxyamino acids, producing glycine and aldehydes, via a retro-aldol mechanism. The polypeptide is Serine hydroxymethyltransferase (Bacillus cereus (strain ZK / E33L)).